Consider the following 118-residue polypeptide: Histone H2B.N (118 aa).

It belongs to the histone H2B family. As to quaternary structure, the nucleosome is a histone octamer containing two molecules each of H2A, H2B, H3 and H4 assembled in one H3-H4 heterotetramer and two H2A-H2B heterodimers. The octamer wraps approximately 147 bp of DNA. As to expression, expressed in germline. Predominantly expressed in oocytes.

Its subcellular location is the nucleus. The protein resides in the chromosome. In terms of biological role, core component of nucleosome. Nucleosomes wrap and compact DNA into chromatin, limiting DNA accessibility to the cellular machineries which require DNA as a template. Histones thereby play a central role in transcription regulation, DNA repair, DNA replication and chromosomal stability. DNA accessibility is regulated via a complex set of post-translational modifications of histones, also called histone code, and nucleosome remodeling. This is Histone H2B.N from Homo sapiens (Human).